We begin with the raw amino-acid sequence, 342 residues long: Probable tyrosine--tRNA ligase, cytoplasmic (342 aa).

Tyrosine 48 provides a ligand contact to L-tyrosine. The short motif at 53-61 is the 'HIGH' region element; the sequence is ITGKPHIGY. Positions 175, 179, 182, and 197 each coordinate L-tyrosine. Positions 231–235 match the 'KMSKS' region motif; the sequence is KMSSS.

The protein belongs to the class-I aminoacyl-tRNA synthetase family. As to quaternary structure, homodimer.

It localises to the cytoplasm. The enzyme catalyses tRNA(Tyr) + L-tyrosine + ATP = L-tyrosyl-tRNA(Tyr) + AMP + diphosphate + H(+). This is Probable tyrosine--tRNA ligase, cytoplasmic from Enterocytozoon bieneusi (strain H348) (Microsporidian parasite).